A 275-amino-acid polypeptide reads, in one-letter code: 4-hydroxy-3-methylbut-2-enyl diphosphate reductase (275 aa).

A [4Fe-4S] cluster-binding site is contributed by cysteine 12. Histidine 36 and histidine 70 together coordinate (2E)-4-hydroxy-3-methylbut-2-enyl diphosphate. 2 residues coordinate dimethylallyl diphosphate: histidine 36 and histidine 70. Residues histidine 36 and histidine 70 each contribute to the isopentenyl diphosphate site. Cysteine 92 serves as a coordination point for [4Fe-4S] cluster. Histidine 120 contributes to the (2E)-4-hydroxy-3-methylbut-2-enyl diphosphate binding site. Histidine 120 contributes to the dimethylallyl diphosphate binding site. Histidine 120 provides a ligand contact to isopentenyl diphosphate. Glutamate 122 acts as the Proton donor in catalysis. Position 157 (threonine 157) interacts with (2E)-4-hydroxy-3-methylbut-2-enyl diphosphate. Cysteine 185 is a [4Fe-4S] cluster binding site. (2E)-4-hydroxy-3-methylbut-2-enyl diphosphate-binding residues include serine 213, serine 214, asparagine 215, and serine 257. Dimethylallyl diphosphate contacts are provided by serine 213, serine 214, asparagine 215, and serine 257. Isopentenyl diphosphate contacts are provided by serine 213, serine 214, asparagine 215, and serine 257.

The protein belongs to the IspH family. It depends on [4Fe-4S] cluster as a cofactor.

The enzyme catalyses isopentenyl diphosphate + 2 oxidized [2Fe-2S]-[ferredoxin] + H2O = (2E)-4-hydroxy-3-methylbut-2-enyl diphosphate + 2 reduced [2Fe-2S]-[ferredoxin] + 2 H(+). It carries out the reaction dimethylallyl diphosphate + 2 oxidized [2Fe-2S]-[ferredoxin] + H2O = (2E)-4-hydroxy-3-methylbut-2-enyl diphosphate + 2 reduced [2Fe-2S]-[ferredoxin] + 2 H(+). It participates in isoprenoid biosynthesis; dimethylallyl diphosphate biosynthesis; dimethylallyl diphosphate from (2E)-4-hydroxy-3-methylbutenyl diphosphate: step 1/1. It functions in the pathway isoprenoid biosynthesis; isopentenyl diphosphate biosynthesis via DXP pathway; isopentenyl diphosphate from 1-deoxy-D-xylulose 5-phosphate: step 6/6. Catalyzes the conversion of 1-hydroxy-2-methyl-2-(E)-butenyl 4-diphosphate (HMBPP) into a mixture of isopentenyl diphosphate (IPP) and dimethylallyl diphosphate (DMAPP). Acts in the terminal step of the DOXP/MEP pathway for isoprenoid precursor biosynthesis. In Nitratiruptor sp. (strain SB155-2), this protein is 4-hydroxy-3-methylbut-2-enyl diphosphate reductase.